Here is a 113-residue protein sequence, read N- to C-terminus: Photosystem II reaction center Psb28 protein (113 aa).

This sequence belongs to the Psb28 family. As to quaternary structure, part of the photosystem II complex.

Its subcellular location is the cellular thylakoid membrane. The chain is Photosystem II reaction center Psb28 protein from Nostoc punctiforme (strain ATCC 29133 / PCC 73102).